A 983-amino-acid polypeptide reads, in one-letter code: Glycine dehydrogenase (decarboxylating) (983 aa).

Lys726 is subject to N6-(pyridoxal phosphate)lysine.

The protein belongs to the GcvP family. As to quaternary structure, the glycine cleavage system is composed of four proteins: P, T, L and H. Pyridoxal 5'-phosphate serves as cofactor.

It catalyses the reaction N(6)-[(R)-lipoyl]-L-lysyl-[glycine-cleavage complex H protein] + glycine + H(+) = N(6)-[(R)-S(8)-aminomethyldihydrolipoyl]-L-lysyl-[glycine-cleavage complex H protein] + CO2. Functionally, the glycine cleavage system catalyzes the degradation of glycine. The P protein binds the alpha-amino group of glycine through its pyridoxal phosphate cofactor; CO(2) is released and the remaining methylamine moiety is then transferred to the lipoamide cofactor of the H protein. This chain is Glycine dehydrogenase (decarboxylating), found in Synechocystis sp. (strain ATCC 27184 / PCC 6803 / Kazusa).